The following is a 592-amino-acid chain: MPDARAADEPAQRLPRTGNPATDYALALLAHLIGAGVRDIVVSPGSRSQALALAAAELERAGAVRLHVRLDERVGGFLALGIGRETGAPAAVVTTSGTATANLHPAVLEAHESGVPLIVITADRPPELRGIRSSQTTHQDGLYGVAVRLAKDVPAPSGEEEDVATAARLAVESVRAAVGAETADPGPVHLNLAFREPLSVAVPPLPVVERGALPALAGAQKLGRETVVPGIGPSTVVIAGADAGPEAEEYARSAGFPLLAEVSSGSRFGPNLVVAYRELLREPEFGGRVRRAVVFGHPTLSREVPALLLRDDVETVVVAPRGRQAYNPGRRAVIVGAVRPAVEADPRSPEARAWVGLWVSASRRLVEAAERVASPDATAPDLAKARSLDPSDALAFARMELAAVRAPITRPLLAEALWRHTWPHDRLVLGASRLIRDADRIVPGKRLRVHSNRGLAGIDGTIATAIGVALASQAVAVETGTLPGITRVLLGDLALLHDAGALLGGSGEAWPNVQVIVGNDGGGTIFDGLEVATIASPAAFDRVLYTPQRGDIAALSTAYGWAHRVVRTKGELDQALSAPPAGASVLEVPLER.

Belongs to the TPP enzyme family. MenD subfamily. As to quaternary structure, homodimer. Mg(2+) is required as a cofactor. Requires Mn(2+) as cofactor. It depends on thiamine diphosphate as a cofactor.

It catalyses the reaction isochorismate + 2-oxoglutarate + H(+) = 5-enolpyruvoyl-6-hydroxy-2-succinyl-cyclohex-3-ene-1-carboxylate + CO2. It functions in the pathway quinol/quinone metabolism; 1,4-dihydroxy-2-naphthoate biosynthesis; 1,4-dihydroxy-2-naphthoate from chorismate: step 2/7. Its pathway is quinol/quinone metabolism; menaquinone biosynthesis. Catalyzes the thiamine diphosphate-dependent decarboxylation of 2-oxoglutarate and the subsequent addition of the resulting succinic semialdehyde-thiamine pyrophosphate anion to isochorismate to yield 2-succinyl-5-enolpyruvyl-6-hydroxy-3-cyclohexene-1-carboxylate (SEPHCHC). The chain is 2-succinyl-5-enolpyruvyl-6-hydroxy-3-cyclohexene-1-carboxylate synthase from Leifsonia xyli subsp. xyli (strain CTCB07).